Consider the following 503-residue polypeptide: Phenylalanine--tRNA ligase alpha subunit (503 aa).

Residue Ser2 is modified to N-acetylserine. Residues 2–173 (SDFQLEILKK…KRKLIAQGKI (172 aa)) are contains the major tRNA-Phe binding sites. L-phenylalanine-binding positions include Thr333, 374–376 (QVE), and Tyr414. Residue Glu416 coordinates Mg(2+). Residue Phe440 participates in L-phenylalanine binding.

The protein belongs to the class-II aminoacyl-tRNA synthetase family. Phe-tRNA synthetase alpha subunit type 2 subfamily. As to quaternary structure, tetramer of two alpha and two beta subunits. Mg(2+) serves as cofactor.

It is found in the cytoplasm. It carries out the reaction tRNA(Phe) + L-phenylalanine + ATP = L-phenylalanyl-tRNA(Phe) + AMP + diphosphate + H(+). The chain is Phenylalanine--tRNA ligase alpha subunit (FRS2) from Saccharomyces cerevisiae (strain ATCC 204508 / S288c) (Baker's yeast).